The primary structure comprises 137 residues: Small heat shock protein IbpA (137 aa).

The sHSP domain maps to 28–137; it reads TQSNGGYPPY…AMKPRRIEIK (110 aa).

The protein belongs to the small heat shock protein (HSP20) family. As to quaternary structure, monomer. Forms homomultimers of about 100-150 subunits at optimal growth temperatures. Conformation changes to monomers at high temperatures or high ionic concentrations.

The protein resides in the cytoplasm. Associates with aggregated proteins, together with IbpB, to stabilize and protect them from irreversible denaturation and extensive proteolysis during heat shock and oxidative stress. Aggregated proteins bound to the IbpAB complex are more efficiently refolded and reactivated by the ATP-dependent chaperone systems ClpB and DnaK/DnaJ/GrpE. Its activity is ATP-independent. The protein is Small heat shock protein IbpA of Pectobacterium atrosepticum (strain SCRI 1043 / ATCC BAA-672) (Erwinia carotovora subsp. atroseptica).